We begin with the raw amino-acid sequence, 376 residues long: Alcohol dehydrogenase class-3 (376 aa).

An N-acetylserine modification is found at Ser1. 7 residues coordinate Zn(2+): Cys47, His69, Cys99, Cys102, Cys105, Cys113, and Cys176.

The protein belongs to the zinc-containing alcohol dehydrogenase family. Class-III subfamily. In terms of assembly, homodimer. The cofactor is Zn(2+). Liver and gut.

Its subcellular location is the cytoplasm. The enzyme catalyses a primary alcohol + NAD(+) = an aldehyde + NADH + H(+). It carries out the reaction a secondary alcohol + NAD(+) = a ketone + NADH + H(+). The catalysed reaction is S-(hydroxymethyl)glutathione + NADP(+) = S-formylglutathione + NADPH + H(+). It catalyses the reaction S-(hydroxymethyl)glutathione + NAD(+) = S-formylglutathione + NADH + H(+). The enzyme catalyses S-nitrosoglutathione + NADH + H(+) = S-(hydroxysulfenamide)glutathione + NAD(+). Class-III ADH is remarkably ineffective in oxidizing ethanol, but it readily catalyzes the oxidation of long-chain primary alcohols and the oxidation of S-(hydroxymethyl) glutathione. Also acts as a S-nitroso-glutathione reductase by catalyzing the NADH-dependent reduction of S-nitrosoglutathione, thereby regulating protein S-nitrosylation. The chain is Alcohol dehydrogenase class-3 from Myxine glutinosa (Atlantic hagfish).